We begin with the raw amino-acid sequence, 368 residues long: o-succinylbenzoate synthase (368 aa).

Lysine 183 serves as the catalytic Proton donor. Mg(2+)-binding residues include aspartate 213, glutamate 239, and aspartate 264. The active-site Proton acceptor is the lysine 290.

The protein belongs to the mandelate racemase/muconate lactonizing enzyme family. MenC type 1 subfamily. In terms of assembly, monomer. A divalent metal cation serves as cofactor.

It carries out the reaction (1R,6R)-6-hydroxy-2-succinyl-cyclohexa-2,4-diene-1-carboxylate = 2-succinylbenzoate + H2O. It participates in quinol/quinone metabolism; 1,4-dihydroxy-2-naphthoate biosynthesis; 1,4-dihydroxy-2-naphthoate from chorismate: step 4/7. Its pathway is cofactor biosynthesis; phylloquinone biosynthesis. In terms of biological role, converts 2-succinyl-6-hydroxy-2,4-cyclohexadiene-1-carboxylate (SHCHC) to 2-succinylbenzoate (OSB). Does not show N-succinylamino acid racemase (NSAR) activity with N-succinyl-L-phenylglycine as substrate. This chain is o-succinylbenzoate synthase, found in Desulfotalea psychrophila (strain LSv54 / DSM 12343).